A 208-amino-acid polypeptide reads, in one-letter code: Small ribosomal subunit protein uS4 (208 aa).

One can recognise an S4 RNA-binding domain in the interval 95 to 159; it reads RRIDNIVYRA…FKKLVRSNIE (65 aa).

This sequence belongs to the universal ribosomal protein uS4 family. Part of the 30S ribosomal subunit. Contacts protein S5. The interaction surface between S4 and S5 is involved in control of translational fidelity.

In terms of biological role, one of the primary rRNA binding proteins, it binds directly to 16S rRNA where it nucleates assembly of the body of the 30S subunit. Functionally, with S5 and S12 plays an important role in translational accuracy. In Borrelia recurrentis (strain A1), this protein is Small ribosomal subunit protein uS4.